The chain runs to 338 residues: DNA-directed RNA polymerase subunit alpha (338 aa).

The tract at residues 1–230 (MRKITTSAYM…QQMSVFKGIL (230 aa)) is alpha N-terminal domain (alpha-NTD). An alpha C-terminal domain (alpha-CTD) region spans residues 247–338 (FSKLLSSVED…ELKSQMSAKE (92 aa)).

The protein belongs to the RNA polymerase alpha chain family. In terms of assembly, homodimer. The RNAP catalytic core consists of 2 alpha, 1 beta, 1 beta' and 1 omega subunit. When a sigma factor is associated with the core the holoenzyme is formed, which can initiate transcription.

It catalyses the reaction RNA(n) + a ribonucleoside 5'-triphosphate = RNA(n+1) + diphosphate. DNA-dependent RNA polymerase catalyzes the transcription of DNA into RNA using the four ribonucleoside triphosphates as substrates. The protein is DNA-directed RNA polymerase subunit alpha of Campylobacter concisus (strain 13826).